A 95-amino-acid chain; its full sequence is Large ribosomal subunit protein bL25 (95 aa).

This sequence belongs to the bacterial ribosomal protein bL25 family. In terms of assembly, part of the 50S ribosomal subunit; part of the 5S rRNA/L5/L18/L25 subcomplex. Contacts the 5S rRNA. Binds to the 5S rRNA independently of L5 and L18.

Its function is as follows. This is one of the proteins that binds to the 5S RNA in the ribosome where it forms part of the central protuberance. In Yersinia enterocolitica serotype O:8 / biotype 1B (strain NCTC 13174 / 8081), this protein is Large ribosomal subunit protein bL25.